The chain runs to 569 residues: S-(+)-linalool synthase, chloroplastic (569 aa).

A chloroplast-targeting transit peptide spans 1 to 39 (MALIATKISSRSCFVSAYPNNSPTFLISKFPNTVDSLSP). Arginine 294, aspartate 331, aspartate 335, arginine 472, and aspartate 475 together coordinate (2E)-geranyl diphosphate. Mg(2+)-binding residues include aspartate 331 and aspartate 335. Positions 331 to 335 (DDIFD) match the DDXXD motif motif. Mg(2+)-binding residues include aspartate 475, serine 479, and glutamate 483.

This sequence belongs to the terpene synthase family. Tpsb subfamily. It depends on Mg(2+) as a cofactor. Mn(2+) serves as cofactor. Predominantly expressed in flowers but also in stems and siliques.

It localises to the plastid. It is found in the chloroplast. The enzyme catalyses (2E)-geranyl diphosphate + H2O = (S)-linalool + diphosphate. Its pathway is secondary metabolite biosynthesis; terpenoid biosynthesis. In terms of biological role, involved in monoterpene (C10) biosynthesis. The major product is (S)-linalool. In Arabidopsis thaliana (Mouse-ear cress), this protein is S-(+)-linalool synthase, chloroplastic.